A 206-amino-acid chain; its full sequence is Oligoribonuclease (206 aa).

Residues 20-183 form the Exonuclease domain; that stretch reads LVWLDMEMTG…ADIHESIDEL (164 aa). The active site involves Tyr-141.

Belongs to the oligoribonuclease family.

It is found in the cytoplasm. Functionally, 3'-to-5' exoribonuclease specific for small oligoribonucleotides. This Burkholderia lata (strain ATCC 17760 / DSM 23089 / LMG 22485 / NCIMB 9086 / R18194 / 383) protein is Oligoribonuclease.